Consider the following 588-residue polypeptide: Arylsulfatase L (588 aa).

The first 31 residues, 1-31 (MLHLHHSWLCFRSWLAGMLSVLLGLVPSASS), serve as a signal peptide directing secretion. Residue Asn-32 is glycosylated (N-linked (GlcNAc...) asparagine). Residues Asp-46 and Asp-47 each coordinate Ca(2+). Residue Asn-58 is glycosylated (N-linked (GlcNAc...) asparagine). Residue Cys-86 coordinates Ca(2+). Cys-86 functions as the Nucleophile in the catalytic mechanism. Cys-86 is modified (3-oxoalanine (Cys)). Asn-125 carries an N-linked (GlcNAc...) asparagine glycan. Lys-145 serves as a coordination point for substrate. Residue His-147 is part of the active site. Residue Asn-258 is glycosylated (N-linked (GlcNAc...) asparagine). His-301 serves as a coordination point for substrate. An N-linked (GlcNAc...) asparagine glycan is attached at Asn-344. Residues Asp-353 and His-354 each contribute to the Ca(2+) site. Residue Lys-378 participates in substrate binding.

It belongs to the sulfatase family. Requires Ca(2+) as cofactor. In terms of processing, the conversion to 3-oxoalanine (also known as C-formylglycine, FGly), of a serine or cysteine residue in prokaryotes and of a cysteine residue in eukaryotes, is critical for catalytic activity.

Its subcellular location is the golgi apparatus. The protein localises to the golgi stack. The enzyme catalyses an aryl sulfate + H2O = a phenol + sulfate + H(+). Exhibits arylsulfatase activity towards the artificial substrate 4-methylumbelliferyl sulfate. May be essential for the correct composition of cartilage and bone matrix during development. Has no activity toward steroid sulfates. The protein is Arylsulfatase L (ARSL) of Macaca fascicularis (Crab-eating macaque).